A 633-amino-acid polypeptide reads, in one-letter code: Biosynthetic arginine decarboxylase (633 aa).

Lysine 101 carries the N6-(pyridoxal phosphate)lysine modification. A substrate-binding site is contributed by 284 to 294 (VDVGGGLGVDY).

It belongs to the Orn/Lys/Arg decarboxylase class-II family. SpeA subfamily. The cofactor is Mg(2+). Pyridoxal 5'-phosphate is required as a cofactor.

It catalyses the reaction L-arginine + H(+) = agmatine + CO2. It functions in the pathway amine and polyamine biosynthesis; agmatine biosynthesis; agmatine from L-arginine: step 1/1. In terms of biological role, catalyzes the biosynthesis of agmatine from arginine. The protein is Biosynthetic arginine decarboxylase of Aeromonas hydrophila subsp. hydrophila (strain ATCC 7966 / DSM 30187 / BCRC 13018 / CCUG 14551 / JCM 1027 / KCTC 2358 / NCIMB 9240 / NCTC 8049).